The chain runs to 103 residues: Ig kappa-b4 chain C region (103 aa).

The 91-residue stretch at 5–95 (PTVLIFPPAA…KVTQGTTSVV (91 aa)) folds into the Ig-like domain. Residues C26 and C85 are joined by a disulfide bond.

This chain is Ig kappa-b4 chain C region, found in Oryctolagus cuniculus (Rabbit).